A 192-amino-acid polypeptide reads, in one-letter code: Vascular endothelial growth factor A (192 aa).

The first 26 residues, 1 to 26 (MNFLLSWIHWGLAALLYFHNAKVLQA), serve as a signal peptide directing secretion. 3 disulfides stabilise this stretch: Cys-52–Cys-94, Cys-83–Cys-128, and Cys-87–Cys-130. N-linked (GlcNAc...) asparagine glycosylation is present at Asn-101.

It belongs to the PDGF/VEGF growth factor family. As to quaternary structure, homodimer; disulfide-linked. Also found as heterodimer with PGF Interacts with FLT1/VEGFR1 and KDR/VEGFR2 receptors, heparan sulfate and heparin. Expressed by the venom gland, and probably other tissues.

The protein localises to the secreted. Functionally, growth factor active in angiogenesis, vasculogenesis and endothelial cell growth. Induces endothelial cell proliferation, promotes cell migration, inhibits apoptosis and induces permeabilization of blood vessels. This Vipera ammodytes ammodytes (Western sand viper) protein is Vascular endothelial growth factor A.